Reading from the N-terminus, the 422-residue chain is MVNKDLIPKYWYNIIPDLPKPLPPPRDPPDAEFSRIELLKKILPKEVLRQQFTIERFIKIPEEVRDRYAIIGRPTPLMRAKRLEEYLDTPAKIYFKFEGATPTGSHKINTAVPQAYFAAEEGISHVVTETGAGQWGTAVALAASMYDLSSTIFMVRVSYEQKPMRKTIMELYGGKVYASPTDLTEFGRKILKENPNHPGSLGIAMSEAIEFALNHNFRYLVGSVLDVVLLHQSVIGMEAIAQLDELGEEPDILIGCVGGGSNFGGFTYPFIGAKKGKKYIAVGAAEIPKFSTGKYEYDYPDTAGLLPLVKMITLGKDYVPPPIYAGGLRYHGVAPTLSLLIKEKIVEWREYKEEEIYEAAKIFMKTQGIVPAPESAHAIKAVIDEALKAKTEKERRVIVFNLSGHGLLDLGNYESIRRRVEK.

Residue K107 is modified to N6-(pyridoxal phosphate)lysine.

This sequence belongs to the TrpB family. As to quaternary structure, tetramer of two alpha and two beta chains. Requires pyridoxal 5'-phosphate as cofactor.

It carries out the reaction (1S,2R)-1-C-(indol-3-yl)glycerol 3-phosphate + L-serine = D-glyceraldehyde 3-phosphate + L-tryptophan + H2O. The protein operates within amino-acid biosynthesis; L-tryptophan biosynthesis; L-tryptophan from chorismate: step 5/5. Its function is as follows. The beta subunit is responsible for the synthesis of L-tryptophan from indole and L-serine. The chain is Tryptophan synthase beta chain 1 (trpB1) from Sulfurisphaera tokodaii (strain DSM 16993 / JCM 10545 / NBRC 100140 / 7) (Sulfolobus tokodaii).